A 170-amino-acid chain; its full sequence is S-ribosylhomocysteine lyase (170 aa).

Residues H54, H58, and C128 each contribute to the Fe cation site.

The protein belongs to the LuxS family. Homodimer. The cofactor is Fe cation.

It carries out the reaction S-(5-deoxy-D-ribos-5-yl)-L-homocysteine = (S)-4,5-dihydroxypentane-2,3-dione + L-homocysteine. Functionally, involved in the synthesis of autoinducer 2 (AI-2) which is secreted by bacteria and is used to communicate both the cell density and the metabolic potential of the environment. The regulation of gene expression in response to changes in cell density is called quorum sensing. Catalyzes the transformation of S-ribosylhomocysteine (RHC) to homocysteine (HC) and 4,5-dihydroxy-2,3-pentadione (DPD). The protein is S-ribosylhomocysteine lyase of Marinomonas sp. (strain MWYL1).